The chain runs to 911 residues: Nitrate reductase [NADH] (911 aa).

Over residues 1–10 (MAASVENRQY) the composition is skewed to polar residues. A disordered region spans residues 1-71 (MAASVENRQY…SEDEDDDDEK (71 aa)). Acidic residues predominate over residues 61 to 71 (SSEDEDDDDEK). Mo-molybdopterin is bound at residue Cys-188. The Cytochrome b5 heme-binding domain occupies 536 to 611 (SKMYSMSEVR…LEDFRIGELI (76 aa)). His-571 and His-594 together coordinate heme. Positions 654–766 (REKIPCKLVD…KGPLGHIEYQ (113 aa)) constitute an FAD-binding FR-type domain. FAD-binding positions include 706–709 (RAYT), 723–727 (VVKIY), Phe-728, Phe-735, 740–742 (QMS), and Thr-793.

It belongs to the nitrate reductase family. In terms of assembly, homodimer. The cofactor is FAD. Heme is required as a cofactor. Requires Mo-molybdopterin as cofactor.

It catalyses the reaction nitrite + NAD(+) + H2O = nitrate + NADH + H(+). Functionally, nitrate reductase is a key enzyme involved in the first step of nitrate assimilation in plants, fungi and bacteria. The protein is Nitrate reductase [NADH] (NIA) of Solanum lycopersicum (Tomato).